Consider the following 181-residue polypeptide: Inorganic pyrophosphatase (181 aa).

3 residues coordinate substrate: Lys-16, Arg-30, and Tyr-42. Residues Asp-52, Asp-57, and Asp-89 each coordinate Mg(2+). Residue Tyr-126 coordinates substrate.

Belongs to the PPase family. As to quaternary structure, homohexamer. Mg(2+) is required as a cofactor.

The protein localises to the cytoplasm. The enzyme catalyses diphosphate + H2O = 2 phosphate + H(+). Catalyzes the hydrolysis of inorganic pyrophosphate (PPi) forming two phosphate ions. The polypeptide is Inorganic pyrophosphatase (Malacoplasma penetrans (strain HF-2) (Mycoplasma penetrans)).